Consider the following 399-residue polypeptide: MGVFRFISISLAAVSAANAAQILSMPHAQTVPNSYIVMMKDDTSDDDFNHHQSWLQSTHTHNITRRATIQNAGMRHKYNFSKMKGYSGIFDEETIKDIAKDPKVMFVEPDTIISVHGKVEQSNVPSWGLARISNPQPGAGSYIYDSSAGEGITVYSVDTGVDVNHEDFEGRAIWGSNQVNDGDDRDGSGHGTHTSGTMVGKEFGIAKKAKLVAVKVLGNDGSGPTSGIVAGINWSVEHARQNGGTKKAVMNMSLGGSSSSALNRAAAQAVEQGMFLSVAAGNDNQDAQSSSPASEPSVCTVGSSAEDDSRSSFSNWGPAIDLFAPGSNIISARPGGGSQSMSGTSMAAPHVAGLAAYLMALEGISGGAVCDRLKELGTSSITDAGPGTPTNVLINNGGA.

The signal sequence occupies residues 1–19 (MGVFRFISISLAAVSAANA). The propeptide occupies 20–116 (AQILSMPHAQ…VEPDTIISVH (97 aa)). The region spanning 34–115 (SYIVMMKDDT…FVEPDTIISV (82 aa)) is the Inhibitor I9 domain. Residues 126-399 (SWGLARISNP…TNVLINNGGA (274 aa)) form the Peptidase S8 domain. Catalysis depends on charge relay system residues aspartate 158 and histidine 190. Positions 175-198 (GSNQVNDGDDRDGSGHGTHTSGTM) are disordered. Asparagine 251 is a glycosylation site (N-linked (GlcNAc...) asparagine). Positions 282 to 294 (NDNQDAQSSSPAS) are enriched in polar residues. The segment at 282-312 (NDNQDAQSSSPASEPSVCTVGSSAEDDSRSS) is disordered. Catalysis depends on serine 345, which acts as the Charge relay system.

It belongs to the peptidase S8 family.

The protein localises to the secreted. Secreted subtilisin-like serine protease with keratinolytic activity that contributes to pathogenicity. This is Subtilisin-like protease 1 (SUB1) from Arthroderma benhamiae (Trichophyton mentagrophytes).